Reading from the N-terminus, the 528-residue chain is Phosphoenolpyruvate carboxykinase (ATP) (528 aa).

Positions 56, 192, and 198 each coordinate substrate. ATP is bound by residues Lys-198, His-217, and 233–241; that span reads GLSGTGKTT. Positions 198 and 217 each coordinate Mn(2+). Asp-254 serves as a coordination point for Mn(2+). The ATP site is built by Glu-282, Arg-319, and Thr-444. A substrate-binding site is contributed by Arg-319.

It belongs to the phosphoenolpyruvate carboxykinase (ATP) family. Requires Mn(2+) as cofactor.

Its subcellular location is the cytoplasm. It carries out the reaction oxaloacetate + ATP = phosphoenolpyruvate + ADP + CO2. The protein operates within carbohydrate biosynthesis; gluconeogenesis. In terms of biological role, involved in the gluconeogenesis. Catalyzes the conversion of oxaloacetate (OAA) to phosphoenolpyruvate (PEP) through direct phosphoryl transfer between the nucleoside triphosphate and OAA. This Bacillus pumilus (strain SAFR-032) protein is Phosphoenolpyruvate carboxykinase (ATP).